We begin with the raw amino-acid sequence, 132 residues long: Agouti-signaling protein (132 aa).

An N-terminal signal peptide occupies residues 1–22; sequence MDVTRLLLATLLVFLCFFTAYS. Asparagine 39 is a glycosylation site (N-linked (GlcNAc...) asparagine). Positions 58 to 88 are disordered; that stretch reads KSKQMSRKEAEKKRSSKKEASMKKVARPRTP. Positions 63 to 79 are enriched in basic and acidic residues; that stretch reads SRKEAEKKRSSKKEASM. 5 disulfides stabilise this stretch: cysteine 93–cysteine 108, cysteine 100–cysteine 114, cysteine 107–cysteine 125, cysteine 111–cysteine 132, and cysteine 116–cysteine 123. An Agouti domain is found at 93–132; the sequence is CVATRDSCKPPAPACCDPCASCQCRFFRSACSCRVLSLNC.

It localises to the secreted. Involved in the regulation of melanogenesis. The binding of ASP to MC1R precludes alpha-MSH initiated signaling and thus blocks production of cAMP, leading to a down-regulation of eumelanogenesis (brown/black pigment) and thus increasing synthesis of pheomelanin (yellow/red pigment). The protein is Agouti-signaling protein (ASIP) of Cercopithecus mitis (Blue monkey).